We begin with the raw amino-acid sequence, 594 residues long: MRDDKTKKSKLSWSKKMVRKWFNIKSKTEKFQADVSLPQGVEVEHRNSFSEREPCTIKKSKTEKLNKNWEQQARQRKMNYENPRIIDVQNHSIFVATWNVAGRSPPEDLNLDEWLHSSAPADIYVLGFQEIVPLNAGNVLGAEDNGPAKKWHSLIRKTLNNLPGASSACHTPSPIPVPIAEIDADFSGSSRQKNETFFNRRSFQTPSVWSMEENDPSISQPRLDRRFSVCDRVFFSHRPSDFDPSFRCGHRPSDYSRRPSDYSRPSDYYSRPSNYSRPSDVSRWGSSDDDNGPGDSPSTFLNSPGSFLGSAANENGYRTPWNSSQYCLVASKQMVGIFLTIWVKSELREHVKNMKVSCVGRGLMGYLGNKGSISISMLLHQTSFCFVCTHLTSGQKEGDELRRNSDVMEILKKTRFPRVQSSADEKSPENILQHDRVIWLGDLNYRIALSYRSAKALVEMQNWRALLENDQLRIEQKRGHVFKGWNEGKIYFPPTYKYSNNSDRYAGGDLHPKEKRRTPAWCDRILWHGEGLHQLSYVRGESRFSDHRPVYGIFSAEVESNHKRSKRTNSHSTARVEAEELLPYARGYTELTFF.

A disordered region spans residues 246–300; that stretch reads FRCGHRPSDYSRRPSDYSRPSDYYSRPSNYSRPSDVSRWGSSDDDNGPGDSPSTF. The segment covering 251-261 has biased composition (basic and acidic residues); that stretch reads RPSDYSRRPSD. Residues 262–279 show a composition bias toward low complexity; it reads YSRPSDYYSRPSNYSRPS. Catalytic regions lie at residues 435–450 and 515–530; these read DRVI…IALS and KRRT…WHGE.

This sequence belongs to the inositol polyphosphate 5-phosphatase family. In terms of tissue distribution, broadly expressed in emerging organs. Mostly localized in procambium of growing organs. Restricted to vascular differentiating cells of young organs.

The protein localises to the nucleus. The protein resides in the cell membrane. It catalyses the reaction a 1,2-diacyl-sn-glycero-3-phospho-(1D-myo-inositol-4,5-bisphosphate) + H2O = a 1,2-diacyl-sn-glycero-3-phospho-(1D-myo-inositol 4-phosphate) + phosphate. The catalysed reaction is a 1,2-diacyl-sn-glycero-3-phospho-(1D-myo-inositol-3,4,5-trisphosphate) + H2O = a 1,2-diacyl-sn-glycero-3-phospho-(1D-myo-inositol-3,4-bisphosphate) + phosphate. In terms of biological role, has phosphatase activity toward PtdIns(4,5)P2 and at a lower extent toward PtdIns(3,4,5)P3 but not toward Ins(1,4,5)P3. Acts redundantly with CVP2 for maintaining vascular continuity. Regulates phosphoinositide-dependent VAN3 localization. Functions in salt stress response by regulating reactive oxygen species (ROS) production and stress-responsive genes expression. In Arabidopsis thaliana (Mouse-ear cress), this protein is Type IV inositol polyphosphate 5-phosphatase 7.